The primary structure comprises 317 residues: MKTALILLSILGMACAFSMKNLHRRVKIEDSEENGVFKYRPRYYLYKHAYFYPHLKRFPVQGSSDSSEENGDDSSEEEEEEEETSNEGENNEESNEDEDSEAENTTLSATTLGYGEDATPGTGYTGLAAIQLPKKAGDITNKATKEKESDEEEEEEEEGNENEESEAEVDENEQGINGTSTNSTEAENGNGSSGGDNGEEGEEESVTGANAEDTTETGRQGKGTSKTTTSPNGGFEPTTPPQVYRTTSPPFGKTTTVEYEGEYEYTGANEYDNGYEIYESENGEPRGDNYRAYEDEYSYFKGQGYDGYDGQNYYHHQ.

The first 16 residues, 1–16, serve as a signal peptide directing secretion; that stretch reads MKTALILLSILGMACA. Serine 31, serine 67, serine 74, serine 75, serine 94, and serine 100 each carry phosphoserine. A disordered region spans residues 58–254; it reads FPVQGSSDSS…RTTSPPFGKT (197 aa). Acidic residues predominate over residues 66-102; sequence SSEENGDDSSEEEEEEEETSNEGENNEESNEDEDSEA. N-linked (GlcNAc...) asparagine glycosylation is present at asparagine 104. Threonine 119 and threonine 122 each carry an O-linked (GalNAc...) threonine glycan. Serine 149 bears the Phosphoserine mark. Over residues 149-173 the composition is skewed to acidic residues; it reads SDEEEEEEEEGNENEESEAEVDENE. Residues asparagine 177, asparagine 182, and asparagine 190 are each glycosylated (N-linked (GlcNAc...) asparagine). The span at 222 to 232 shows a compositional bias: polar residues; the sequence is KGTSKTTTSPN. Residues threonine 227, threonine 228, threonine 229, threonine 238, and threonine 239 are each glycosylated (O-linked (GalNAc...) threonine). A Phosphoserine modification is found at serine 280. The short motif at 286–288 is the Integrin-binding motif element; that stretch reads RGD. Tyrosine 313 and tyrosine 314 each carry sulfotyrosine.

Monomer. Interacts with integrins; the interaction promotes cell adhesion. N-glycosylated; glycans consist of sialylated and core-fucosylated bi-, tri- and tetraantennary chains. In terms of processing, O-glycosylated at eight sites; mucin-type glycans contain Gal, GlcNAc, GalNAc and terminal NeuAc. In terms of tissue distribution, expressed in bone (at protein level). Expressed in trophoblast cells of placenta (at protein level). Expressed in brain.

It is found in the secreted. Functionally, binds tightly to hydroxyapatite. Appears to form an integral part of the mineralized matrix. Probably important to cell-matrix interaction. Promotes adhesion and migration of various cells via the alpha-V/beta-3 integrin receptor (ITGAV:ITGB3). This Homo sapiens (Human) protein is Integrin-binding sialoprotein (IBSP).